Consider the following 467-residue polypeptide: Adenosylhomocysteinase (467 aa).

3 residues coordinate substrate: T68, D144, and E169. An NAD(+)-binding site is contributed by 170–172; the sequence is TTT. Residues K199 and D203 each coordinate substrate. NAD(+) contacts are provided by residues N204, 233–238, E256, N305, 326–328, and N373; these read GYGDVG and IGH.

It belongs to the adenosylhomocysteinase family. The cofactor is NAD(+).

The protein localises to the cytoplasm. The catalysed reaction is S-adenosyl-L-homocysteine + H2O = L-homocysteine + adenosine. The protein operates within amino-acid biosynthesis; L-homocysteine biosynthesis; L-homocysteine from S-adenosyl-L-homocysteine: step 1/1. May play a key role in the regulation of the intracellular concentration of adenosylhomocysteine. This Acinetobacter baylyi (strain ATCC 33305 / BD413 / ADP1) protein is Adenosylhomocysteinase.